Consider the following 182-residue polypeptide: Ribosome-recycling factor (182 aa).

It belongs to the RRF family.

It is found in the cytoplasm. Responsible for the release of ribosomes from messenger RNA at the termination of protein biosynthesis. May increase the efficiency of translation by recycling ribosomes from one round of translation to another. This is Ribosome-recycling factor from Cyanothece sp. (strain PCC 7425 / ATCC 29141).